The chain runs to 226 residues: Killer cell lectin-like receptor subfamily E member 1 (226 aa).

The disordered stretch occupies residues 1-28; it reads MDEAPVTRSTLNVNSQQKSKAKNKIKNT. Over 1–68 the chain is Cytoplasmic; the sequence is MDEAPVTRST…GKGNCSPPWR (68 aa). Polar residues predominate over residues 7–18; it reads TRSTLNVNSQQK. The chain crosses the membrane as a helical; Signal-anchor for type II membrane protein span at residues 69 to 89; it reads LLSSVLGAMCLLLMAVAMVMT. Topologically, residues 90–226 are extracellular; it reads TFTTKSSSER…ANKLTYICKK (137 aa). Disulfide bonds link cysteine 113–cysteine 124, cysteine 141–cysteine 224, and cysteine 202–cysteine 216. The C-type lectin domain occupies 120–225; that stretch reads FRCSCYFFSK…CANKLTYICK (106 aa). N-linked (GlcNAc...) asparagine glycosylation occurs at asparagine 145.

In terms of assembly, heterodimer; with KLRI1 or KLRI2. As to expression, expressed in natural killer (NK) cells (at protein level). Also detected in natural killer T (NKT) cells (at protein level). Has little or no expression in T cells (at protein level).

It localises to the cell membrane. In terms of biological role, lectin-like receptor for natural killer (NK) cells. Can either inhibit or activate NK cell cytotoxic activity, depending on its binding partner. Heterodimer formation with KLRI1 mediates NK cell inhibition whereas heterodimer formation with KLRI2 mediates NK cell activation. Plays a role in allogeneic recognition by the immune system. The chain is Killer cell lectin-like receptor subfamily E member 1 from Mus musculus (Mouse).